A 247-amino-acid polypeptide reads, in one-letter code: Uridylate kinase (247 aa).

16-19 (KLSG) serves as a coordination point for ATP. Gly58 is a binding site for UMP. ATP contacts are provided by Gly59 and Arg63. UMP-binding positions include Asp78 and 139–146 (TGNPFFTT). ATP contacts are provided by Thr166, Tyr172, and Asp175.

This sequence belongs to the UMP kinase family. Homohexamer.

It localises to the cytoplasm. The enzyme catalyses UMP + ATP = UDP + ADP. The protein operates within pyrimidine metabolism; CTP biosynthesis via de novo pathway; UDP from UMP (UMPK route): step 1/1. Inhibited by UTP. In terms of biological role, catalyzes the reversible phosphorylation of UMP to UDP. This chain is Uridylate kinase, found in Xylella fastidiosa (strain 9a5c).